A 537-amino-acid polypeptide reads, in one-letter code: Proline--tRNA ligase (537 aa).

Belongs to the class-II aminoacyl-tRNA synthetase family. ProS type 3 subfamily. As to quaternary structure, homodimer.

The protein localises to the cytoplasm. The enzyme catalyses tRNA(Pro) + L-proline + ATP = L-prolyl-tRNA(Pro) + AMP + diphosphate. Its function is as follows. Catalyzes the attachment of proline to tRNA(Pro) in a two-step reaction: proline is first activated by ATP to form Pro-AMP and then transferred to the acceptor end of tRNA(Pro). The polypeptide is Proline--tRNA ligase (Nanoarchaeum equitans (strain Kin4-M)).